The sequence spans 241 residues: Thiamine import ATP-binding protein ThiQ (241 aa).

Residues 2–239 (IQLDKLNHCY…PKDEVLIQYL (238 aa)) form the ABC transporter domain. An ATP-binding site is contributed by 41 to 48 (GPSGAGKS).

Belongs to the ABC transporter superfamily. Thiamine importer (TC 3.A.1.19.1) family. In terms of assembly, the complex is composed of two ATP-binding proteins (ThiQ), two transmembrane proteins (ThiP) and a solute-binding protein (ThiB).

It is found in the cell inner membrane. The catalysed reaction is thiamine(out) + ATP + H2O = thiamine(in) + ADP + phosphate + H(+). Functionally, part of the ABC transporter complex ThiBPQ involved in thiamine import. Responsible for energy coupling to the transport system. This chain is Thiamine import ATP-binding protein ThiQ, found in Photobacterium profundum (strain SS9).